The following is a 572-amino-acid chain: MLSKSEKNVDLLAGNMSNLSFDGHGTPGGTGLFPNQNITKRRTRPAGINDSPSPVKPSFFPYEDTSNMDIDEVSQPDMDVSNSPKKLPPKFYERATSNKTQRVVSVCKMYFLEHYCDMFDYVISRRQRTKQVLEYLQQQSQLPNSDQIKLNEEWSSYLQREHQVLRKRRLKPKNRDFEMITQVGQGGYGQVYLARKKDTKEVCALKILNKKLLFKLNETKHVLTERDILTTTRSEWLVKLLYAFQDLQSLYLAMEFVPGGDFRTLLINTRCLKSGHARFYISEMFCAVNALHDLGYTHRDLKPENFLIDAKGHIKLTDFGLAAGTISNERIESMKIRLEKIKDLEFPAFTEKSIEDRRKMYNQLREKEINYANSMVGSPDYMALEVLEGKKYDFTVDYWSLGCMLFESLVGYTPFSGSSTNETYDNLRRWKQTLRRPRQSDGRAAFSDRTWDLITRLIADPINRLRSFEHVKRMSYFADINFSTLRSMIPPFTPQLDSETDAGYFDDFTSEADMAKYADVFKRQDKLTAMVDDSAVSSKLVGFTFRHRNGKQGSSGILFNGLEHSDPFSTFY.

Serine 17, serine 20, and serine 74 each carry phosphoserine. Positions 177-477 (FEMITQVGQG…FEHVKRMSYF (301 aa)) constitute a Protein kinase domain. ATP contacts are provided by residues 183-191 (VGQGGYGQV) and lysine 206. The active-site Proton acceptor is the aspartate 300. Serine 374 bears the Phosphoserine; by CDC15 mark. The AGC-kinase C-terminal domain maps to 478–555 (ADINFSTLRS…RHRNGKQGSS (78 aa)). Threonine 544 bears the Phosphothreonine; by CDC15 mark.

It belongs to the protein kinase superfamily. Ser/Thr protein kinase family. Interacts with MOB1. MOB1-binding is required for a late mitotic event. Post-translationally, phosphorylation of Ser-374 and Thr-544 by CDC15 is essential for activation of DBF2 kinase activity.

The protein localises to the cytoplasm. It is found in the cytoskeleton. The protein resides in the microtubule organizing center. Its subcellular location is the spindle pole body. It localises to the bud neck. The protein localises to the nucleus. It carries out the reaction L-seryl-[protein] + ATP = O-phospho-L-seryl-[protein] + ADP + H(+). The enzyme catalyses L-threonyl-[protein] + ATP = O-phospho-L-threonyl-[protein] + ADP + H(+). Kinase activity is regulated by BUB2, CDC15 and CDC5, and is maximal during nuclear division. CDK1 kinase inhibits cellular DBF2-MOB1 kinase activity via phosphorylation of both CDC15 and MOB1. Ser/Thr-protein kinase involved in the mitotic exit network (MEN) and required after the metaphase to anaphase cell cycle transition. Phosphorylates CHS2 to regulate its dynamics and chitin synthesis at the division site during cytokinesis. Coordinates septin and actomyosin ring (AMR) functions during cytokinesis through the phosphorylation of HOF1. In complex with MOB1, phosphorylates CDC14 at sites adjacent to its nuclear localization sequence, thereby retaining CDC14 in the cytoplasm. Also binds to SWI5 and CLB2 mRNAs cotranscriptionally to regulate their decay. In the nucleus, the DBF2-MOB1 complex regulates passenger protein localization during anaphase. Mediates sorbic acid stress tolerance through promoting vacuolar H(+)-ATPase function, probably through phosphorylation of VMA1 and VMA2 subunits. In Saccharomyces cerevisiae (strain ATCC 204508 / S288c) (Baker's yeast), this protein is Cell cycle protein kinase DBF2 (DBF2).